The primary structure comprises 290 residues: tRNA (adenine(58)-N(1))-methyltransferase catalytic subunit TRMT61A (290 aa).

Ser-2 is subject to N-acetylserine. Substrate regions lie at residues Leu-20–His-22, Gln-35–Val-42, Gly-64–Trp-65, Gln-85–Ser-89, and Ser-110–Val-117. S-adenosyl-L-methionine-binding positions include Leu-87, Ser-114–Ser-116, Glu-135, Arg-140, Asp-163–Val-164, and Asp-181. Substrate stretches follow at residues Leu-180–Pro-183 and Ser-205–Gln-212. Ser-264 is modified (phosphoserine). Thr-279 contributes to the substrate binding site.

Belongs to the class I-like SAM-binding methyltransferase superfamily. TRM61 family. In terms of assembly, heterotetramer; composed of two copies of TRMT6 and two copies of TRMT61A.

It is found in the nucleus. The enzyme catalyses adenosine(58) in tRNA + S-adenosyl-L-methionine = N(1)-methyladenosine(58) in tRNA + S-adenosyl-L-homocysteine + H(+). It carries out the reaction an adenosine in mRNA + S-adenosyl-L-methionine = an N(1)-methyladenosine in mRNA + S-adenosyl-L-homocysteine + H(+). Its function is as follows. Catalytic subunit of tRNA (adenine-N(1)-)-methyltransferase, which catalyzes the formation of N(1)-methyladenine at position 58 (m1A58) in initiator methionyl-tRNA. Catalytic subunit of mRNA N(1)-methyltransferase complex, which mediates methylation of adenosine residues at the N(1) position of a small subset of mRNAs: N(1) methylation takes place in tRNA T-loop-like structures of mRNAs and is only present at low stoichiometries. The protein is tRNA (adenine(58)-N(1))-methyltransferase catalytic subunit TRMT61A (Trmt61a) of Mus musculus (Mouse).